The following is a 399-amino-acid chain: Exodeoxyribonuclease 7 large subunit (399 aa).

This sequence belongs to the XseA family. As to quaternary structure, heterooligomer composed of large and small subunits.

It localises to the cytoplasm. The enzyme catalyses Exonucleolytic cleavage in either 5'- to 3'- or 3'- to 5'-direction to yield nucleoside 5'-phosphates.. Bidirectionally degrades single-stranded DNA into large acid-insoluble oligonucleotides, which are then degraded further into small acid-soluble oligonucleotides. This is Exodeoxyribonuclease 7 large subunit from Clostridium botulinum (strain Eklund 17B / Type B).